A 378-amino-acid polypeptide reads, in one-letter code: UPF0284 protein MK0224 (378 aa).

Belongs to the UPF0284 family.

The chain is UPF0284 protein MK0224 from Methanopyrus kandleri (strain AV19 / DSM 6324 / JCM 9639 / NBRC 100938).